Reading from the N-terminus, the 343-residue chain is Holliday junction branch migration complex subunit RuvB (343 aa).

The interval 1–26 (MKEKILTFSSDPSSPVTRHETEEDTG) is disordered. Residues 3 to 193 (EKILTFSSDP…FGIFRKFDFY (191 aa)) form a large ATPase domain (RuvB-L) region. Positions 7–16 (TFSSDPSSPV) are enriched in polar residues. ATP is bound by residues leucine 32, arginine 33, glycine 74, lysine 77, threonine 78, threonine 79, 140–142 (EDF), arginine 183, tyrosine 193, and arginine 230. Position 78 (threonine 78) interacts with Mg(2+). Residues 194–264 (SRQDLARIVS…AIDDALALEG (71 aa)) form a small ATPAse domain (RuvB-S) region. The head domain (RuvB-H) stretch occupies residues 267–343 (EKGLTGLDRS…YRHLGVQWRG (77 aa)). DNA contacts are provided by arginine 322 and arginine 327.

This sequence belongs to the RuvB family. As to quaternary structure, homohexamer. Forms an RuvA(8)-RuvB(12)-Holliday junction (HJ) complex. HJ DNA is sandwiched between 2 RuvA tetramers; dsDNA enters through RuvA and exits via RuvB. An RuvB hexamer assembles on each DNA strand where it exits the tetramer. Each RuvB hexamer is contacted by two RuvA subunits (via domain III) on 2 adjacent RuvB subunits; this complex drives branch migration. In the full resolvosome a probable DNA-RuvA(4)-RuvB(12)-RuvC(2) complex forms which resolves the HJ.

Its subcellular location is the cytoplasm. It carries out the reaction ATP + H2O = ADP + phosphate + H(+). In terms of biological role, the RuvA-RuvB-RuvC complex processes Holliday junction (HJ) DNA during genetic recombination and DNA repair, while the RuvA-RuvB complex plays an important role in the rescue of blocked DNA replication forks via replication fork reversal (RFR). RuvA specifically binds to HJ cruciform DNA, conferring on it an open structure. The RuvB hexamer acts as an ATP-dependent pump, pulling dsDNA into and through the RuvAB complex. RuvB forms 2 homohexamers on either side of HJ DNA bound by 1 or 2 RuvA tetramers; 4 subunits per hexamer contact DNA at a time. Coordinated motions by a converter formed by DNA-disengaged RuvB subunits stimulates ATP hydrolysis and nucleotide exchange. Immobilization of the converter enables RuvB to convert the ATP-contained energy into a lever motion, pulling 2 nucleotides of DNA out of the RuvA tetramer per ATP hydrolyzed, thus driving DNA branch migration. The RuvB motors rotate together with the DNA substrate, which together with the progressing nucleotide cycle form the mechanistic basis for DNA recombination by continuous HJ branch migration. Branch migration allows RuvC to scan DNA until it finds its consensus sequence, where it cleaves and resolves cruciform DNA. The chain is Holliday junction branch migration complex subunit RuvB from Desulfosudis oleivorans (strain DSM 6200 / JCM 39069 / Hxd3) (Desulfococcus oleovorans).